A 911-amino-acid polypeptide reads, in one-letter code: Protein translocase subunit SecA (911 aa).

ATP contacts are provided by residues glutamine 87, 105-109, and aspartate 513; that span reads GEGKT. A disordered region spans residues 853–911; it reads IQLQHEQVSGLEPEAGEAPSAGEPRSEQPYVRAGRKVGRNDPCPCGSGKKFKACHGKLG. Positions 862–875 are enriched in low complexity; that stretch reads GLEPEAGEAPSAGE. Residues cysteine 895, cysteine 897, cysteine 906, and histidine 907 each contribute to the Zn(2+) site. Basic residues predominate over residues 901-911; the sequence is KKFKACHGKLG.

This sequence belongs to the SecA family. In terms of assembly, monomer and homodimer. Part of the essential Sec protein translocation apparatus which comprises SecA, SecYEG and auxiliary proteins SecDF-YajC and YidC. The cofactor is Zn(2+).

The protein resides in the cell inner membrane. Its subcellular location is the cytoplasm. It catalyses the reaction ATP + H2O + cellular proteinSide 1 = ADP + phosphate + cellular proteinSide 2.. Its function is as follows. Part of the Sec protein translocase complex. Interacts with the SecYEG preprotein conducting channel. Has a central role in coupling the hydrolysis of ATP to the transfer of proteins into and across the cell membrane, serving both as a receptor for the preprotein-SecB complex and as an ATP-driven molecular motor driving the stepwise translocation of polypeptide chains across the membrane. The protein is Protein translocase subunit SecA of Teredinibacter turnerae (strain ATCC 39867 / T7901).